The following is an 81-amino-acid chain: ATP synthase subunit c, chloroplastic (81 aa).

Helical transmembrane passes span 3–23 (PLISAASVIAAGLSVGLASIG) and 57–77 (LAFMEALTIYGLVVALALLFA).

It belongs to the ATPase C chain family. In terms of assembly, F-type ATPases have 2 components, F(1) - the catalytic core - and F(0) - the membrane proton channel. F(1) has five subunits: alpha(3), beta(3), gamma(1), delta(1), epsilon(1). F(0) has four main subunits: a(1), b(1), b'(1) and c(10-14). The alpha and beta chains form an alternating ring which encloses part of the gamma chain. F(1) is attached to F(0) by a central stalk formed by the gamma and epsilon chains, while a peripheral stalk is formed by the delta, b and b' chains.

The protein resides in the plastid. It localises to the chloroplast thylakoid membrane. Its function is as follows. F(1)F(0) ATP synthase produces ATP from ADP in the presence of a proton or sodium gradient. F-type ATPases consist of two structural domains, F(1) containing the extramembraneous catalytic core and F(0) containing the membrane proton channel, linked together by a central stalk and a peripheral stalk. During catalysis, ATP synthesis in the catalytic domain of F(1) is coupled via a rotary mechanism of the central stalk subunits to proton translocation. Key component of the F(0) channel; it plays a direct role in translocation across the membrane. A homomeric c-ring of between 10-14 subunits forms the central stalk rotor element with the F(1) delta and epsilon subunits. In Pinus koraiensis (Korean pine), this protein is ATP synthase subunit c, chloroplastic.